A 334-amino-acid chain; its full sequence is ELMO domain-containing protein 1 (334 aa).

The region spanning 133-314 (QHEEMLLKLW…KFRKRIIKQL (182 aa)) is the ELMO domain.

Its function is as follows. Acts as a GTPase-activating protein (GAP) toward guanine nucleotide exchange factors like ARL2, ARL3, ARF1 and ARF6, but not for GTPases outside the Arf family. This is ELMO domain-containing protein 1 (ELMOD1) from Homo sapiens (Human).